We begin with the raw amino-acid sequence, 322 residues long: Cytochrome c biogenesis protein CcsA (322 aa).

The next 8 membrane-spanning stretches (helical) occupy residues 19-39 (NAIF…LIIV), 43-63 (LICN…FFYL), 72-92 (FFPL…LLFI), 104-124 (VIGA…SLSL), 150-170 (MMLS…YLVL), 230-250 (TIGI…VWAN), 264-281 (TWAL…HARL), and 291-311 (AFLG…VNFL).

Belongs to the CcmF/CycK/Ccl1/NrfE/CcsA family. As to quaternary structure, may interact with Ccs1.

The protein resides in the plastid. It is found in the chloroplast thylakoid membrane. Required during biogenesis of c-type cytochromes (cytochrome c6 and cytochrome f) at the step of heme attachment. In Heterosigma akashiwo (strain NIES-293 / 8280G21-1), this protein is Cytochrome c biogenesis protein CcsA.